Here is a 972-residue protein sequence, read N- to C-terminus: Microtubule-associated protein 1S (972 aa).

The necessary for the microtubule-organizing center localization stretch occupies residues 1–715; sequence MAAVMAAPEP…SESLPTLSDS (715 aa). Polar residues predominate over residues 454–469; the sequence is LEVPSRANSQDSLASR. Residues 454-632 form a disordered region; it reads LEVPSRANSQ…PHSTEVDESL (179 aa). Ser462 is subject to Phosphoserine. Over residues 489–505 the composition is skewed to basic and acidic residues; it reads VRREPALATRDQKKDTK. Composition is skewed to pro residues over residues 537–550 and 564–581; these read APVPAAPPAAPAPE and PPAPSPTLSPAQSPPPTA. Ser585, Ser590, and Ser592 each carry phosphoserine. The segment at 600 to 972 is necessary for interaction with RASSF1; that stretch reads PDASPSATTP…EAFPACKVEF (373 aa). Positions 602–620 are enriched in low complexity; that stretch reads ASPSATTPTLTTPSLPAEL. Positions 644–879 are necessary for association with microtubules; sequence DAGLSLPLRL…GGGAGHLDQN (236 aa). Residues Ser659 and Ser683 each carry the phosphoserine modification. The segment at 671–854 is disordered; that stretch reads CEFSHRKPPP…SSGPSSRPAP (184 aa). Over residues 702-721 the composition is skewed to low complexity; that stretch reads PTSVSESLPTLSDSDPVPVA. The residue at position 723 (Ser723) is a Phosphoserine. The span at 737–748 shows a compositional bias: pro residues; the sequence is LPTPRVPPPLPD. Over residues 781–800 the composition is skewed to low complexity; it reads ARPSSASAAPRAATVAAKTK. A necessary for association with actin region spans residues 874–972; the sequence is GHLDQNFFLR…EAFPACKVEF (99 aa). Positions 880-904 are necessary for the mitochondrial aggregation and genome destruction; it reads FFLRVRALCYVISGQGQRQEEGLRG.

Belongs to the MAP1A/MAP1B/MAP1S family. Heterodimer of a heavy and a light chain. Interacts with microtubules and actin. Both MAP1S heavy and light chains interact with microtubules. MAP1S light chain interacts with actin. Interacts with LRPPRC, RASSF1, microtubules and VCY2. Interacts (via C-terminus) with GAN (via Kelch domains). Interacts with WDR47 (via N-terminus of light chain). Interacts with ESR1. As to expression, expressed in cortex cerebellum, dorsal root ganglia, frontal cortex, hippocampus, hypothalamus, mesencephalon, medulla oblongata, occipital cortex, pons, spinal cord, striatum of the brain, neurons, heart, testis and skeletal muscle (at protein level).

Its subcellular location is the nucleus. It localises to the cytoplasm. The protein localises to the cytosol. The protein resides in the cytoskeleton. It is found in the spindle. In terms of biological role, microtubule-associated protein that mediates aggregation of mitochondria resulting in cell death and genomic destruction (MAGD). Plays a role in anchoring the microtubule organizing center to the centrosomes. Binds to DNA. Plays a role in apoptosis. Involved in the formation of microtubule bundles. The chain is Microtubule-associated protein 1S (Map1s) from Rattus norvegicus (Rat).